The primary structure comprises 695 residues: Putative pentatricopeptide repeat-containing protein At1g77010, mitochondrial (695 aa).

The N-terminal 64 residues, 1–64 (MILKYNSSYR…KGFLSSIVIV (64 aa)), are a transit peptide targeting the mitochondrion. 17 PPR repeats span residues 61 to 91 (IVIVANHLLQMYSRSGKMGIARNLFDEMPDR), 92 to 122 (NYFSWNTMIEGYMNSGEKGTSLRFFDMMPER), 123 to 157 (DGYSWNVVVSGFAKAGELSVARRLFNAMPEKDVVT), 159 to 184 (NSLLHGYILNGYAEEALRLFKELNFS), 186 to 220 (DAITLTTVLKACAELEALKCGKQIHAQILIGGVEC), 221 to 251 (DSKMNSSLVNVYAKCGDLRMASYMLEQIREP), 252 to 282 (DDHSLSALISGYANCGRVNESRGLFDRKSNR), 283 to 313 (CVILWNSMISGYIANNMKMEALVLFNEMRNE), 317 to 351 (DSRTLAAVINACIGLGFLETGKQMHCHACKFGLID), 352 to 382 (DIVVASTLLDMYSKCGSPMEACKLFSEVESY), 383 to 417 (DTILLNSMIKVYFSCGRIDDAKRVFERIENKSLIS), 418 to 448 (WNSMTNGFSQNGCTVETLEYFHQMHKLDLPT), 449 to 483 (DEVSLSSVISACASISSLELGEQVFARATIVGLDS), 484 to 514 (DQVVSSSLIDLYCKCGFVEHGRRVFDTMVKS), 515 to 549 (DEVPWNSMISGYATNGQGFEAIDLFKKMSVAGIRP), 550 to 585 (TQITFMVVLTACNYCGLVEEGRKLFESMKVDHGFVP), and 586 to 616 (DKEHFSCMVDLLARAGYVEEAINLVEEMPFD). The tract at residues 621–695 (MWSSILRGCV…KNPGSSWTDC (75 aa)) is type E motif; degenerate.

This sequence belongs to the PPR family. PCMP-E subfamily.

The protein localises to the mitochondrion. The polypeptide is Putative pentatricopeptide repeat-containing protein At1g77010, mitochondrial (PCMP-E5) (Arabidopsis thaliana (Mouse-ear cress)).